We begin with the raw amino-acid sequence, 757 residues long: 5-methyltetrahydropteroyltriglutamate--homocysteine methyltransferase (757 aa).

Residues 16–19 (RELK) and Lys-112 contribute to the 5-methyltetrahydropteroyltri-L-glutamate site. L-homocysteine is bound by residues 432–434 (IGS) and Glu-485. L-methionine contacts are provided by residues 432-434 (IGS) and Glu-485. 5-methyltetrahydropteroyltri-L-glutamate contacts are provided by residues 516–517 (RC) and Trp-562. Position 600 (Asp-600) interacts with L-homocysteine. Asp-600 contributes to the L-methionine binding site. A 5-methyltetrahydropteroyltri-L-glutamate-binding site is contributed by Glu-606. 3 residues coordinate Zn(2+): His-642, Cys-644, and Glu-666. His-695 functions as the Proton donor in the catalytic mechanism. A Zn(2+)-binding site is contributed by Cys-727.

It belongs to the vitamin-B12 independent methionine synthase family. Zn(2+) serves as cofactor.

The enzyme catalyses 5-methyltetrahydropteroyltri-L-glutamate + L-homocysteine = tetrahydropteroyltri-L-glutamate + L-methionine. The protein operates within amino-acid biosynthesis; L-methionine biosynthesis via de novo pathway; L-methionine from L-homocysteine (MetE route): step 1/1. In terms of biological role, catalyzes the transfer of a methyl group from 5-methyltetrahydrofolate to homocysteine resulting in methionine formation. This is 5-methyltetrahydropteroyltriglutamate--homocysteine methyltransferase from Actinobacillus pleuropneumoniae serotype 7 (strain AP76).